The sequence spans 491 residues: Cysteine--tRNA ligase (491 aa).

C31 contributes to the Zn(2+) binding site. The 'HIGH' region signature appears at 33–43; that stretch reads PTVYGDAHLGH. Zn(2+)-binding residues include C226, H251, and E255. The short motif at 283–287 is the 'KMSKS' region element; the sequence is KMGKS. K286 serves as a coordination point for ATP.

It belongs to the class-I aminoacyl-tRNA synthetase family. In terms of assembly, monomer. It depends on Zn(2+) as a cofactor.

It is found in the cytoplasm. It carries out the reaction tRNA(Cys) + L-cysteine + ATP = L-cysteinyl-tRNA(Cys) + AMP + diphosphate. The sequence is that of Cysteine--tRNA ligase from Parabacteroides distasonis (strain ATCC 8503 / DSM 20701 / CIP 104284 / JCM 5825 / NCTC 11152).